The primary structure comprises 242 residues: DNA-directed RNA polymerase III subunit rpc5 (242 aa).

2 disordered regions span residues 1-22 (MSFS…TEEQ) and 153-172 (LKAA…PRGP). The span at 155 to 172 (AAAGPSNSSSGTSTPRGP) shows a compositional bias: low complexity.

Component of the RNA polymerase III (Pol III) complex consisting of 17 subunits.

The protein localises to the cytoplasm. Its subcellular location is the nucleus. DNA-dependent RNA polymerase catalyzes the transcription of DNA into RNA using the four ribonucleoside triphosphates as substrates. Specific peripheric component of RNA polymerase III which synthesizes small RNAs, such as 5S rRNA and tRNAs. The RPC53/RPC4-RPC37/RPC5 subcomplex is required for terminator recognition and reinitiation. The protein is DNA-directed RNA polymerase III subunit rpc5 (rpc37) of Schizosaccharomyces pombe (strain 972 / ATCC 24843) (Fission yeast).